Consider the following 1330-residue polypeptide: ESX-3 secretion system protein EccC3 (1330 aa).

The next 2 helical transmembrane spans lie at 43–63 and 65–85; these read LPYLIGILIVGMIVALVATGM and VISPQTLFFPFVLLLAATALY. FtsK domains are found at residues 456-662, 811-1000, and 1090-1280; these read GEPL…SVSR, RDPL…RDSN, and LAPV…ADSG. ATP contacts are provided by residues 479 to 486, 829 to 836, and 1107 to 1114; these read GMTGSGKS, GGPKSGKS, and GDARSGKT.

Part of the ESX-3 / type VII secretion system (T7SS), which is composed of cytosolic and membrane components. The ESX-3 membrane complex is composed of EccB3, EccC3, EccD3 and EccE3.

It localises to the cell inner membrane. Its function is as follows. Part of the ESX-3 specialized secretion system, which is important for iron and zinc uptake or homeostasis. This Mycobacterium tuberculosis (strain ATCC 25618 / H37Rv) protein is ESX-3 secretion system protein EccC3.